Reading from the N-terminus, the 319-residue chain is Extracellular phospholipase A1 (319 aa).

Residues 1-24 (MSMPLSFTSAVSPVAAIPTPRAAA) form the signal peptide.

It catalyses the reaction a 1,2-diacyl-sn-glycero-3-phosphocholine + H2O = a 2-acyl-sn-glycero-3-phosphocholine + a fatty acid + H(+). The sequence is that of Extracellular phospholipase A1 (phlA) from Serratia liquefaciens.